A 181-amino-acid chain; its full sequence is Photosystem I assembly protein Ycf4 (181 aa).

The next 2 helical transmembrane spans lie at 19-39 and 61-81; these read YFWA…GISS and IVMM…MATL.

It belongs to the Ycf4 family.

It localises to the plastid. The protein localises to the chloroplast thylakoid membrane. Seems to be required for the assembly of the photosystem I complex. The chain is Photosystem I assembly protein Ycf4 from Thalassiosira pseudonana (Marine diatom).